The sequence spans 92 residues: Major allergen I polypeptide chain 1 (92 aa).

Residues 1–22 (MKGACVLVLLWAALLLISGGNC) form the signal peptide.

It belongs to the secretoglobin family. Heterotetramer composed of two non-covalently linked disulfide-linked heterodimer of chains 1 and 2. Saliva and sebaceous glands.

The protein resides in the secreted. The sequence is that of Major allergen I polypeptide chain 1 (CH1) from Felis catus (Cat).